The following is an 85-amino-acid chain: Large ribosomal subunit protein bL31B (85 aa).

Belongs to the bacterial ribosomal protein bL31 family. Type B subfamily. In terms of assembly, part of the 50S ribosomal subunit.

This Stutzerimonas stutzeri (strain A1501) (Pseudomonas stutzeri) protein is Large ribosomal subunit protein bL31B.